A 167-amino-acid polypeptide reads, in one-letter code: NAD(P)H-quinone oxidoreductase subunit I, chloroplastic (167 aa).

2 consecutive 4Fe-4S ferredoxin-type domains span residues 55–84 (GRIH…VDWK) and 95–124 (LNYS…MTEE). C64, C67, C70, C74, C104, C107, C110, and C114 together coordinate [4Fe-4S] cluster.

It belongs to the complex I 23 kDa subunit family. NDH is composed of at least 16 different subunits, 5 of which are encoded in the nucleus. Requires [4Fe-4S] cluster as cofactor.

The protein localises to the plastid. It is found in the chloroplast thylakoid membrane. The catalysed reaction is a plastoquinone + NADH + (n+1) H(+)(in) = a plastoquinol + NAD(+) + n H(+)(out). It catalyses the reaction a plastoquinone + NADPH + (n+1) H(+)(in) = a plastoquinol + NADP(+) + n H(+)(out). NDH shuttles electrons from NAD(P)H:plastoquinone, via FMN and iron-sulfur (Fe-S) centers, to quinones in the photosynthetic chain and possibly in a chloroplast respiratory chain. The immediate electron acceptor for the enzyme in this species is believed to be plastoquinone. Couples the redox reaction to proton translocation, and thus conserves the redox energy in a proton gradient. This Citrus sinensis (Sweet orange) protein is NAD(P)H-quinone oxidoreductase subunit I, chloroplastic.